A 175-amino-acid chain; its full sequence is Protein-export protein SecB (175 aa).

This sequence belongs to the SecB family. As to quaternary structure, homotetramer, a dimer of dimers. One homotetramer interacts with 1 SecA dimer.

Its subcellular location is the cytoplasm. Functionally, one of the proteins required for the normal export of preproteins out of the cell cytoplasm. It is a molecular chaperone that binds to a subset of precursor proteins, maintaining them in a translocation-competent state. It also specifically binds to its receptor SecA. This chain is Protein-export protein SecB, found in Anaplasma marginale (strain Florida).